The following is a 315-amino-acid chain: Adenine deaminase (315 aa).

Residues His-14, His-16, and His-194 each coordinate Zn(2+). The active-site Proton donor is the Glu-197. Zn(2+) is bound at residue Asp-275. Asp-276 serves as a coordination point for substrate.

The protein belongs to the metallo-dependent hydrolases superfamily. Adenosine and AMP deaminases family. Adenine deaminase type 2 subfamily. Requires Zn(2+) as cofactor.

The catalysed reaction is adenine + H2O + H(+) = hypoxanthine + NH4(+). Its function is as follows. Catalyzes the hydrolytic deamination of adenine to hypoxanthine. Plays an important role in the purine salvage pathway and in nitrogen catabolism. In Pseudomonas putida (strain ATCC 47054 / DSM 6125 / CFBP 8728 / NCIMB 11950 / KT2440), this protein is Adenine deaminase.